The sequence spans 541 residues: 3-oxoacyl-[acyl-carrier-protein] synthase II, chloroplastic (541 aa).

The N-terminal 103 residues, 1 to 103 (MVGASSSYAS…NRNQRRLNRA (103 aa)), are a transit peptide targeting the chloroplast. In terms of domain architecture, Ketosynthase family 3 (KS3) spans 129-539 (QRRVVVTGMG…GHNSSIIFAP (411 aa)). Catalysis depends on for beta-ketoacyl synthase activity residues Cys-292, His-432, and His-468.

It belongs to the thiolase-like superfamily. Beta-ketoacyl-ACP synthases family. In terms of assembly, homodimer. As to expression, mostly expressed in siliques, and, to a lower extent, in leaves, stems, flower buds, and flowers.

The protein resides in the plastid. It is found in the chloroplast stroma. The catalysed reaction is a fatty acyl-[ACP] + malonyl-[ACP] + H(+) = a 3-oxoacyl-[ACP] + holo-[ACP] + CO2. In terms of biological role, essential protein that catalyzes the condensation reaction of fatty acid synthesis by the addition to an acyl acceptor of two carbons from malonyl-ACP. Specific for elongation from C-16 and C-16 to unsaturated C-18 fatty acids. Confers resistance to low temperatures by maintaining chloroplast membranes integrity. Involved in the regulation of fatty acids ratios during seed metabolism. Required for embryo development, especially at the transition from the globular to the heart stage. In Arabidopsis thaliana (Mouse-ear cress), this protein is 3-oxoacyl-[acyl-carrier-protein] synthase II, chloroplastic (KAS2).